The chain runs to 193 residues: Xanthine phosphoribosyltransferase (193 aa).

Positions 20 and 27 each coordinate xanthine. 128 to 132 is a 5-phospho-alpha-D-ribose 1-diphosphate binding site; the sequence is ANGQA. Xanthine is bound at residue Lys156.

The protein belongs to the purine/pyrimidine phosphoribosyltransferase family. Xpt subfamily. Homodimer.

The protein localises to the cytoplasm. It catalyses the reaction XMP + diphosphate = xanthine + 5-phospho-alpha-D-ribose 1-diphosphate. It functions in the pathway purine metabolism; XMP biosynthesis via salvage pathway; XMP from xanthine: step 1/1. In terms of biological role, converts the preformed base xanthine, a product of nucleic acid breakdown, to xanthosine 5'-monophosphate (XMP), so it can be reused for RNA or DNA synthesis. The sequence is that of Xanthine phosphoribosyltransferase from Streptococcus pyogenes serotype M5 (strain Manfredo).